Reading from the N-terminus, the 214-residue chain is Riboflavin kinase (214 aa).

The segment at 1–27 (MRPDRPRDPVTGPDEGPESPYPIRMSG) is disordered. 2 residues coordinate Mg(2+): threonine 44 and asparagine 46. Glutamate 101 acts as the Nucleophile in catalysis.

Belongs to the flavokinase family. The cofactor is Zn(2+). It depends on Mg(2+) as a cofactor.

It carries out the reaction riboflavin + ATP = FMN + ADP + H(+). It participates in cofactor biosynthesis; FMN biosynthesis; FMN from riboflavin (ATP route): step 1/1. Catalyzes the phosphorylation of riboflavin (vitamin B2) to form flavin mononucleotide (FMN) coenzyme. The polypeptide is Riboflavin kinase (fmn1) (Aspergillus niger (strain ATCC MYA-4892 / CBS 513.88 / FGSC A1513)).